Reading from the N-terminus, the 299-residue chain is Leucine zipper transcription factor-like protein 1 (299 aa).

Residues 145-299 (GTTELLNKEI…KRLAKYESED (155 aa)) are interaction with BSS9. Positions 145-299 (GTTELLNKEI…KRLAKYESED (155 aa)) form a coiled coil.

It belongs to the LZTFL1 family. Self-associates. Interacts with BBS9; the interaction mediates the association of LZTL1 with the BBsome complex and regulates BBSome ciliary trafficking.

It localises to the cytoplasm. In terms of biological role, regulates ciliary localization of the BBSome complex. Together with the BBSome complex, controls SMO ciliary trafficking and contributes to the sonic hedgehog (SHH) pathway regulation. May play a role in neurite outgrowth. May have tumor suppressor function. This Rattus norvegicus (Rat) protein is Leucine zipper transcription factor-like protein 1 (Lztfl1).